Consider the following 88-residue polypeptide: Alpha-latrotoxin associated low molecular weight protein (88 aa).

The signal sequence occupies residues 1–18 (MSKLFFVAFLCLIISVFA).

The protein belongs to the arthropod CHH/MIH/GIH/VIH hormone family. As to expression, expressed by the venom gland.

It is found in the secreted. May increase the toxicity of alpha-latrotoxin and/or other venom components. Is non-toxic to mice and to the cockroach Periplaneta americana. This is Alpha-latrotoxin associated low molecular weight protein from Latrodectus hesperus (Western black widow spider).